The chain runs to 171 residues: Urease accessory protein UreE (171 aa).

The disordered stretch occupies residues 143–171; the sequence is SGGHQHHHGHDHDHGHHGHDHDHHHPDHE. A compositionally biased stretch (basic and acidic residues) spans 152–171; the sequence is HDHDHGHHGHDHDHHHPDHE.

Belongs to the UreE family.

The protein resides in the cytoplasm. Functionally, involved in urease metallocenter assembly. Binds nickel. Probably functions as a nickel donor during metallocenter assembly. The protein is Urease accessory protein UreE of Brucella abortus biovar 1 (strain 9-941).